Consider the following 152-residue polypeptide: UPF0225 protein YchJ (152 aa).

Belongs to the UPF0225 family.

This chain is UPF0225 protein YchJ, found in Shigella boydii serotype 18 (strain CDC 3083-94 / BS512).